The chain runs to 258 residues: E3 ubiquitin-protein ligase RNF170 (258 aa).

At 1–24 (MAKYQGEVQSLKLDDDSVIEGVSD) the chain is on the lumenal side. Residues 25–45 (QVLVAVVVSFALIATLVYALF) traverse the membrane as a helical segment. Topologically, residues 46 to 201 (RNVHQNIHPE…GGLFWMFRIR (156 aa)) are cytoplasmic. An RING-type zinc finger spans residues 87–130 (CPICLHQASFPVETNCGHLFCGACIIAYWRYGSWLGAISCPICR). Residues 202-222 (IILCLMGAFFYLISPLDFVPE) form a helical membrane-spanning segment. A topological domain (lumenal) is located at residue alanine 223. A helical membrane pass occupies residues 224–244 (LFGILGFLDDFFVIFLLLIYI). Topologically, residues 245–258 (SIMYREVITQRLTR) are cytoplasmic.

(Microbial infection) Interacts with human cytomegalovirus protein NEC2/UL50; this interaction promotes of UBA7 ubiquitination and subsequent proteasomal degradation. As to quaternary structure, constitutively associated with the ERLIN1/ERLIN 2 complex. Interacts with activated ITPR1. Expressed in the spinal cord.

It localises to the endoplasmic reticulum membrane. The enzyme catalyses S-ubiquitinyl-[E2 ubiquitin-conjugating enzyme]-L-cysteine + [acceptor protein]-L-lysine = [E2 ubiquitin-conjugating enzyme]-L-cysteine + N(6)-ubiquitinyl-[acceptor protein]-L-lysine.. It functions in the pathway protein modification; protein ubiquitination. Its function is as follows. E3 ubiquitin-protein ligase that plays an essential role in stimulus-induced inositol 1,4,5-trisphosphate receptor type 1 (ITPR1) ubiquitination and degradation via the endoplasmic reticulum-associated degradation (ERAD) pathway. Also involved in ITPR1 turnover in resting cells. Selectively inhibits the TLR3-triggered innate immune response by promoting the 'Lys-48'-linked polyubiquitination and degradation of TLR3. The polypeptide is E3 ubiquitin-protein ligase RNF170 (RNF170) (Homo sapiens (Human)).